Here is a 339-residue protein sequence, read N- to C-terminus: Ornithine utilization regulator (339 aa).

The HTH araC/xylS-type domain maps to 241–338 (TRVRRLLLAR…GKLPSDYREA (98 aa)). DNA-binding regions (H-T-H motif) lie at residues 258-279 (EQAARELHTSGRSLRRHLSSLG) and 305-328 (LYEIALLLGFNDSSNFRRAFRKWT).

Probably activates the ArgJ gene that encodes ornithine acetyltransferase. Binds to its own promoter-operator region. Probably binds ornithine. This chain is Ornithine utilization regulator (oruR), found in Pseudomonas aeruginosa (strain ATCC 15692 / DSM 22644 / CIP 104116 / JCM 14847 / LMG 12228 / 1C / PRS 101 / PAO1).